We begin with the raw amino-acid sequence, 345 residues long: Protein lifeguard 1 (345 aa).

The disordered stretch occupies residues 1 to 115 (MSHEKSFLVS…GNYQEEGPPS (115 aa)). Composition is skewed to pro residues over residues 24-46 (APMP…PFQP) and 79-98 (GPYP…PPFQ). Transmembrane regions (helical) follow at residues 139 to 159 (VFLV…IFTF), 171 to 191 (VWTY…LSCC), 202 to 222 (LVAL…IASF), 227 to 247 (AVIM…IFSM), 257 to 277 (MGVL…CIFI), 281 to 301 (ILEI…LAVD), and 320 to 340 (FAAL…LTII).

Belongs to the BI1 family. LFG subfamily.

It localises to the membrane. In terms of biological role, potential apoptotic regulator. The polypeptide is Protein lifeguard 1 (Grina) (Mus musculus (Mouse)).